We begin with the raw amino-acid sequence, 273 residues long: DNA repair protein RecO (273 aa).

This sequence belongs to the RecO family.

Functionally, involved in DNA repair and RecF pathway recombination. This is DNA repair protein RecO from Saccharopolyspora erythraea (strain ATCC 11635 / DSM 40517 / JCM 4748 / NBRC 13426 / NCIMB 8594 / NRRL 2338).